The chain runs to 407 residues: 5-aminolevulinate synthase 1 (407 aa).

The substrate site is built by Arg-21, Ser-137, and Lys-156. 3 residues coordinate pyridoxal 5'-phosphate: Ser-189, His-217, and Thr-245. Lys-248 is a catalytic residue. An N6-(pyridoxal phosphate)lysine modification is found at Lys-248. The pyridoxal 5'-phosphate site is built by Ser-277 and Thr-278. Thr-363 lines the substrate pocket.

It belongs to the class-II pyridoxal-phosphate-dependent aminotransferase family. Homodimer. The cofactor is pyridoxal 5'-phosphate.

The enzyme catalyses succinyl-CoA + glycine + H(+) = 5-aminolevulinate + CO2 + CoA. It participates in porphyrin-containing compound metabolism; protoporphyrin-IX biosynthesis; 5-aminolevulinate from glycine: step 1/1. The polypeptide is 5-aminolevulinate synthase 1 (hemA) (Cereibacter sphaeroides (strain ATCC 17023 / DSM 158 / JCM 6121 / CCUG 31486 / LMG 2827 / NBRC 12203 / NCIMB 8253 / ATH 2.4.1.) (Rhodobacter sphaeroides)).